The primary structure comprises 81 residues: EC protein III (81 aa).

The protein belongs to the metallothionein superfamily. Type 15 family.

In terms of biological role, binds 5 molecules of zinc. May have a role in Zn(2+) homeostasis during embryogenesis. This is EC protein III from Triticum aestivum (Wheat).